Here is a 120-residue protein sequence, read N- to C-terminus: Large ribosomal subunit protein bL19 (120 aa).

The protein belongs to the bacterial ribosomal protein bL19 family.

In terms of biological role, this protein is located at the 30S-50S ribosomal subunit interface and may play a role in the structure and function of the aminoacyl-tRNA binding site. The polypeptide is Large ribosomal subunit protein bL19 (Trichormus variabilis (strain ATCC 29413 / PCC 7937) (Anabaena variabilis)).